The sequence spans 282 residues: Hydroxyethylthiazole kinase 2 (282 aa).

Met-44 contacts substrate. Residues Arg-120 and Ser-179 each coordinate ATP. Gly-206 is a substrate binding site.

It belongs to the Thz kinase family. Mg(2+) is required as a cofactor.

It carries out the reaction 5-(2-hydroxyethyl)-4-methylthiazole + ATP = 4-methyl-5-(2-phosphooxyethyl)-thiazole + ADP + H(+). It participates in cofactor biosynthesis; thiamine diphosphate biosynthesis; 4-methyl-5-(2-phosphoethyl)-thiazole from 5-(2-hydroxyethyl)-4-methylthiazole: step 1/1. Functionally, catalyzes the phosphorylation of the hydroxyl group of 4-methyl-5-beta-hydroxyethylthiazole (THZ). This chain is Hydroxyethylthiazole kinase 2, found in Methanosphaera stadtmanae (strain ATCC 43021 / DSM 3091 / JCM 11832 / MCB-3).